Reading from the N-terminus, the 207-residue chain is Dephospho-CoA kinase (207 aa).

Residues 12-207 (LIGITGMIGG…LYSTLLGKML (196 aa)) form the DPCK domain. ATP is bound at residue 20–25 (GGGKST).

It belongs to the CoaE family.

The protein resides in the cytoplasm. It catalyses the reaction 3'-dephospho-CoA + ATP = ADP + CoA + H(+). Its pathway is cofactor biosynthesis; coenzyme A biosynthesis; CoA from (R)-pantothenate: step 5/5. Functionally, catalyzes the phosphorylation of the 3'-hydroxyl group of dephosphocoenzyme A to form coenzyme A. This chain is Dephospho-CoA kinase, found in Leptospira interrogans serogroup Icterohaemorrhagiae serovar Lai (strain 56601).